The sequence spans 513 residues: Probable cytosol aminopeptidase (513 aa).

Mn(2+) contacts are provided by Lys-275 and Asp-280. Lys-287 is a catalytic residue. Residues Asp-298, Asp-357, and Glu-359 each contribute to the Mn(2+) site. Arg-361 is a catalytic residue.

It belongs to the peptidase M17 family. Requires Mn(2+) as cofactor.

The protein resides in the cytoplasm. It catalyses the reaction Release of an N-terminal amino acid, Xaa-|-Yaa-, in which Xaa is preferably Leu, but may be other amino acids including Pro although not Arg or Lys, and Yaa may be Pro. Amino acid amides and methyl esters are also readily hydrolyzed, but rates on arylamides are exceedingly low.. The enzyme catalyses Release of an N-terminal amino acid, preferentially leucine, but not glutamic or aspartic acids.. Functionally, presumably involved in the processing and regular turnover of intracellular proteins. Catalyzes the removal of unsubstituted N-terminal amino acids from various peptides. This chain is Probable cytosol aminopeptidase, found in Streptomyces avermitilis (strain ATCC 31267 / DSM 46492 / JCM 5070 / NBRC 14893 / NCIMB 12804 / NRRL 8165 / MA-4680).